The following is a 179-amino-acid chain: Large ribosomal subunit protein uL6 (179 aa).

The segment at 151-179 (RKPEPYKGKGIKYDNEQIRRKAGKSGGKK) is disordered. Basic and acidic residues predominate over residues 152–169 (KPEPYKGKGIKYDNEQIR). The segment covering 170 to 179 (RKAGKSGGKK) has biased composition (basic residues).

Belongs to the universal ribosomal protein uL6 family. In terms of assembly, part of the 50S ribosomal subunit.

Its function is as follows. This protein binds to the 23S rRNA, and is important in its secondary structure. It is located near the subunit interface in the base of the L7/L12 stalk, and near the tRNA binding site of the peptidyltransferase center. The sequence is that of Large ribosomal subunit protein uL6 from Nitratidesulfovibrio vulgaris (strain ATCC 29579 / DSM 644 / CCUG 34227 / NCIMB 8303 / VKM B-1760 / Hildenborough) (Desulfovibrio vulgaris).